A 210-amino-acid chain; its full sequence is CASP-like protein 3A1 (210 aa).

The Cytoplasmic segment spans residues 1–44 (MNGLKTPPEIGIQLPEAKVAAETGTMSGPLVPPRSDRSVRRGTD). A helical membrane pass occupies residues 45–65 (VAHVVLRFVCLLTSVIALSLM). Residues 66-94 (ATAKEAASISIYGFLLPVSSKWSFSDSFE) are Extracellular-facing. A helical membrane pass occupies residues 95-115 (YLVGVSAAVAAHALLQLIISV). Topologically, residues 116–130 (SRLLRKSPVIPSRNH) are cytoplasmic. The helical transmembrane segment at 131-151 (AWLIFAGDQAFAYAMLSAGSA) threads the bilayer. The Extracellular segment spans residues 152-185 (ASGVTNLNRTGIRHSPLPNFCKPLRSFCDHVAAS). N-linked (GlcNAc...) asparagine glycosylation is present at asparagine 159. The helical transmembrane segment at 186–206 (IAFTFFSCFLLATSAILDVIW) threads the bilayer. Over 207–210 (LSKY) the chain is Cytoplasmic.

It belongs to the Casparian strip membrane proteins (CASP) family. As to quaternary structure, homodimer and heterodimers.

The protein localises to the cell membrane. The sequence is that of CASP-like protein 3A1 from Vitis vinifera (Grape).